The sequence spans 760 residues: Striatin-4 (760 aa).

Residues 1 to 65 (MMEERAAAAV…PTAGPEPLSL (65 aa)) are disordered. The segment covering 7–35 (AAAVASAASSCRPLGSGTAPNPTAAAPAS) has biased composition (low complexity). A compositionally biased stretch (gly residues) spans 43 to 54 (PVGKGGGGGGSP). Ser53 carries the phosphoserine modification. Positions 69-136 (LHFIQHEWAR…QERAKYHKLK (68 aa)) form a coiled coil. Residues 71 to 79 (FIQHEWARF) form a caveolin-binding region. Positions 165–182 (ENSPLVWKEGRQLLRQYL) are calmodulin-binding. Ser206, Ser223, and Ser276 each carry phosphoserine. Disordered stretches follow at residues 210–233 (NGAGEPVEGAPRASPGPGGLSGGE) and 272–346 (EDED…PHEL). Composition is skewed to acidic residues over residues 272–283 (EDEDSDEDDELD) and 302–317 (EMEDEDEEDDSEDAIN). Positions 332–346 (PDPRRCTSEGNPHEL) are enriched in basic and acidic residues. WD repeat units lie at residues 443-482 (SHYDGIRSLAFHHSQSALLTASEDGTLKLWNLQKAVTAKK), 496-535 (AHRGPVLAVTMGSNSEYCYSGGADARIHSWKIPDLNMDPY), 549-588 (GHGDAVWGLAFSPTSQRLASCSADGTVRIWDPSSSGPSCL), 595-635 (GEHG…ALLT), 642-681 (SGPAQINQVVSHPSQPLTITAHDDRGIRFLDNRTGKSVHS), 684-723 (AHLDAVTCLAVDPNGVFLMSGSHDCSLRLWSLDNKTCVQE), and 730-759 (KHEEAIHAVACHPSKALIASAGADALAKVF).

It belongs to the WD repeat striatin family. As to quaternary structure, part of the core of STRIPAK complexes composed of PP2A catalytic and scaffolding subunits, the striatins (PP2A regulatory subunits), the striatin-associated proteins MOB4, STRIP1 and STRIP2, PDCD10 and members of the STE20 kinases, such as STK24 and STK26. Interacts with CTTNBP2NL. Mainly expressed in brain but is also expressed at low levels in the kidney.

The protein localises to the cytoplasm. It is found in the membrane. The protein resides in the cell projection. Its subcellular location is the dendritic spine. In terms of biological role, calmodulin-binding scaffolding protein which is the center of the striatin-interacting phosphatase and kinase (STRIPAK) complexes. STRIPAK complexes have critical roles in protein (de)phosphorylation and are regulators of multiple signaling pathways including Hippo, MAPK, nuclear receptor and cytoskeleton remodeling. Different types of STRIPAK complexes are involved in a variety of biological processes such as cell growth, differentiation, apoptosis, metabolism and immune regulation. Key regulator of the expanded Hippo signaling pathway by interacting and allowing the inhibition of MAP4K kinases by the STRIPAK complex. This Mus musculus (Mouse) protein is Striatin-4 (Strn4).